The primary structure comprises 198 residues: TATA-box-binding protein (198 aa).

A run of 2 repeats spans residues isoleucine 14–leucine 90 and isoleucine 105–leucine 181.

It belongs to the TBP family.

Its function is as follows. General factor that plays a role in the activation of archaeal genes transcribed by RNA polymerase. Binds specifically to the TATA box promoter element which lies close to the position of transcription initiation. The polypeptide is TATA-box-binding protein (Saccharolobus shibatae (strain ATCC 51178 / DSM 5389 / JCM 8931 / NBRC 15437 / B12) (Sulfolobus shibatae)).